We begin with the raw amino-acid sequence, 406 residues long: Collagen and calcium-binding EGF domain-containing protein 1 (406 aa).

The signal sequence occupies residues 1 to 34 (MVPPPPSRGGAARGQLGRSLGPLLLLLALGHTWT). The EGF-like; calcium-binding domain occupies 134–175 (DIDECASSNGTLCAHICINTLGSYRCECREGYIREDDGKTCT). 3 cysteine pairs are disulfide-bonded: C138–C150, C146–C159, and C161–C174. An N-linked (GlcNAc...) asparagine glycan is attached at N142. N-linked (GlcNAc...) asparagine glycosylation occurs at N182. 2 disordered regions span residues 244-335 (YLPG…PGSF) and 360-406 (RTHS…DFYP). Collagen-like domains lie at 245 to 290 (LPGP…PMGP) and 300 to 333 (GRRGPVGPPGAPGRDGSKGERGAPGPRGSPGPPG). Over residues 270–279 (PGMPGPPGQP) the composition is skewed to pro residues. Residues 281 to 292 (PRGSMGPMGPSP) are compositionally biased toward low complexity. S385 carries O-linked (Xyl...) (chondroitin sulfate) serine glycosylation. Residues 386–406 (GDDHPRRTETRDLRAPRDFYP) are compositionally biased toward basic and acidic residues.

The protein belongs to the CCBE1 family. As to expression, detected in fibroblasts and urine (at protein level). Not expressed in blood or lymphatic endothelial cells.

Its subcellular location is the secreted. Functionally, required for lymphangioblast budding and angiogenic sprouting from venous endothelium during embryogenesis. The sequence is that of Collagen and calcium-binding EGF domain-containing protein 1 (CCBE1) from Homo sapiens (Human).